The following is a 753-amino-acid chain: Subtilisin-like protease SBT3.17 (753 aa).

An N-terminal signal peptide occupies residues 1 to 29 (MGNSFLIADTSSLVIGLLLILNGVFISAA). Residues 30 to 116 (KHYGLNKIHI…VVPSRVMRLK (87 aa)) constitute a propeptide, activation peptide. The Inhibitor I9 domain occupies 38-115 (HIVHLGAKQH…RVVPSRVMRL (78 aa)). Asn97 carries an N-linked (GlcNAc...) asparagine glycan. The Peptidase S8 domain occupies 120-603 (TFDYLGLLPT…GGLINPEKVT (484 aa)). Catalysis depends on Asp150, which acts as the Charge relay system. An N-linked (GlcNAc...) asparagine glycan is attached at Asn161. His227 acts as the Charge relay system in catalysis. The N-linked (GlcNAc...) asparagine glycan is linked to Asn369. The Charge relay system role is filled by Ser534. N-linked (GlcNAc...) asparagine glycans are attached at residues Asn639, Asn704, and Asn737.

This sequence belongs to the peptidase S8 family.

The protein localises to the secreted. This chain is Subtilisin-like protease SBT3.17, found in Arabidopsis thaliana (Mouse-ear cress).